The sequence spans 354 residues: NADH-quinone oxidoreductase subunit H 2 (354 aa).

The next 8 membrane-spanning stretches (helical) occupy residues Ile4–Thr24, Ile81–Gly101, Ile130–Gly150, Val170–Phe190, Gly201–Leu221, Val269–Leu289, Leu296–Val316, and Trp333–Leu353.

Belongs to the complex I subunit 1 family. NDH-1 is composed of 14 different subunits. Subunits NuoA, H, J, K, L, M, N constitute the membrane sector of the complex.

It is found in the cell inner membrane. The enzyme catalyses a quinone + NADH + 5 H(+)(in) = a quinol + NAD(+) + 4 H(+)(out). NDH-1 shuttles electrons from NADH, via FMN and iron-sulfur (Fe-S) centers, to quinones in the respiratory chain. The immediate electron acceptor for the enzyme in this species is believed to be ubiquinone. Couples the redox reaction to proton translocation (for every two electrons transferred, four hydrogen ions are translocated across the cytoplasmic membrane), and thus conserves the redox energy in a proton gradient. This subunit may bind ubiquinone. This is NADH-quinone oxidoreductase subunit H 2 from Koribacter versatilis (strain Ellin345).